A 247-amino-acid chain; its full sequence is ATP synthase subunit a, chloroplastic (247 aa).

Transmembrane regions (helical) follow at residues 38–58 (QVLITSWVVIAILLGSAAIAV), 95–115 (VPFIGTMFLFIFVSNWSGALL), 134–154 (INTTVALALLTSAAYFYAGLT), 199–219 (LVVVVLVSLVPLVVPIPVMFL), and 220–240 (GLFTSGIQALIFATLAAAYIG).

Belongs to the ATPase A chain family. In terms of assembly, F-type ATPases have 2 components, CF(1) - the catalytic core - and CF(0) - the membrane proton channel. CF(1) has five subunits: alpha(3), beta(3), gamma(1), delta(1), epsilon(1). CF(0) has four main subunits: a, b, b' and c.

It is found in the plastid. Its subcellular location is the chloroplast thylakoid membrane. In terms of biological role, key component of the proton channel; it plays a direct role in the translocation of protons across the membrane. This chain is ATP synthase subunit a, chloroplastic, found in Ceratophyllum demersum (Rigid hornwort).